Here is a 534-residue protein sequence, read N- to C-terminus: Bifunctional pantoate ligase/cytidylate kinase (534 aa).

Residues 1–302 form a pantoate--beta-alanine ligase region; the sequence is MRLLTTVAAL…LGSTRLIDNT (302 aa). 48–55 is a binding site for ATP; the sequence is MGSLHQGH. The Proton donor role is filled by H55. Q79 lines the (R)-pantoate pocket. Q79 contacts beta-alanine. 172–175 contributes to the ATP binding site; the sequence is GQKD. Q178 provides a ligand contact to (R)-pantoate. ATP-binding positions include V201 and 209–212; that span reads CSSR. Residues 303-534 form a cytidylate kinase region; it reads ILRDRQPIIA…DYYQQRLSQW (232 aa).

It in the N-terminal section; belongs to the pantothenate synthetase family. In the C-terminal section; belongs to the cytidylate kinase family. Type 1 subfamily.

It localises to the cytoplasm. The catalysed reaction is (R)-pantoate + beta-alanine + ATP = (R)-pantothenate + AMP + diphosphate + H(+). It catalyses the reaction CMP + ATP = CDP + ADP. It carries out the reaction dCMP + ATP = dCDP + ADP. It functions in the pathway cofactor biosynthesis; (R)-pantothenate biosynthesis; (R)-pantothenate from (R)-pantoate and beta-alanine: step 1/1. Catalyzes the condensation of pantoate with beta-alanine in an ATP-dependent reaction via a pantoyl-adenylate intermediate. In terms of biological role, catalyzes the transfer of a phosphate group from ATP to either CMP or dCMP to form CDP or dCDP and ADP, respectively. The chain is Bifunctional pantoate ligase/cytidylate kinase from Nostoc sp. (strain PCC 7120 / SAG 25.82 / UTEX 2576).